Consider the following 225-residue polypeptide: Small ribosomal subunit protein uS3 (225 aa).

A KH type-2 domain is found at 38–106 (LRAHLRRKLS…DVALNIVEIR (69 aa)).

It belongs to the universal ribosomal protein uS3 family. As to quaternary structure, part of the 30S ribosomal subunit. Forms a tight complex with proteins S10 and S14.

In terms of biological role, binds the lower part of the 30S subunit head. Binds mRNA in the 70S ribosome, positioning it for translation. The chain is Small ribosomal subunit protein uS3 from Gluconacetobacter diazotrophicus (strain ATCC 49037 / DSM 5601 / CCUG 37298 / CIP 103539 / LMG 7603 / PAl5).